A 199-amino-acid polypeptide reads, in one-letter code: Thioredoxin peroxidase (199 aa).

One can recognise a Thioredoxin domain in the interval 6 to 165 (AKLNHPAPHF…TLRLVKAFQF (160 aa)). Cys-52 (cysteine sulfenic acid (-SOH) intermediate) is an active-site residue. Positions 179 to 199 (PGSKTMKADPNGSQDYFSSMN) are disordered. Polar residues predominate over residues 189–199 (NGSQDYFSSMN).

The protein belongs to the peroxiredoxin family. AhpC/Prx1 subfamily. Homodimer; disulfide-linked, upon oxidation.

It catalyses the reaction a hydroperoxide + [thioredoxin]-dithiol = an alcohol + [thioredoxin]-disulfide + H2O. Its function is as follows. Thiol-specific peroxidase that catalyzes the reduction of hydrogen peroxide and organic hydroperoxides to water and alcohols, respectively. Plays a role in cell protection against oxidative stress by detoxifying peroxides and as sensor of hydrogen peroxide-mediated signaling events. The protein is Thioredoxin peroxidase of Trypanosoma brucei rhodesiense.